The following is a 1526-amino-acid chain: DNA topoisomerase 2-alpha (1526 aa).

M1 is subject to N-acetylmethionine. Phosphoserine is present on S4. Residue K17 forms a Glycyl lysine isopeptide (Lys-Gly) (interchain with G-Cter in SUMO2) linkage. Residues N90, N118, and 146–148 each bind ATP; that span reads SSN. Glycyl lysine isopeptide (Lys-Gly) (interchain with G-Cter in SUMO2) cross-links involve residues K154 and K155. 159–166 lines the ATP pocket; that stretch reads GRNGYGAK. Phosphothreonine is present on T280. An interaction with DNA region spans residues 340–342; sequence KKK. K350 is covalently cross-linked (Glycyl lysine isopeptide (Lys-Gly) (interchain with G-Cter in SUMO2)). 374–376 provides a ligand contact to ATP; that stretch reads QTK. Glycyl lysine isopeptide (Lys-Gly) (interchain with G-Cter in SUMO2) cross-links involve residues K384, K395, K414, K416, K423, and K438. Residues 453-570 enclose the Toprim domain; that stretch reads CTLILTEGDS…SLLRHRFLEE (118 aa). Residue E459 participates in Mg(2+) binding. Residues K464, K478, and K527 each participate in a glycyl lysine isopeptide (Lys-Gly) (interchain with G-Cter in SUMO2) cross-link. Mg(2+)-binding residues include D539 and D541. Residues K582, K597, K612, K620, K623, K630, K637, K653, K660, and K674 each participate in a glycyl lysine isopeptide (Lys-Gly) (interchain with G-Cter in SUMO2) cross-link. The region spanning 713-1168 is the Topo IIA-type catalytic domain; sequence IPSMVDGLKP…TPSDLWKEDL (456 aa). The active-site O-(5'-phospho-DNA)-tyrosine intermediate is the Y803. Positions 988–997 are interaction with DNA; the sequence is KLQTSLTCNS. Residue K1073 forms a Glycyl lysine isopeptide (Lys-Gly) (interchain with G-Cter in SUMO2) linkage. Residues 1087–1096 show a composition bias toward basic and acidic residues; the sequence is AWKEAQQKVP. Positions 1087-1120 are disordered; that stretch reads AWKEAQQKVPEEEENEENEESESESTSPAAESGP. Over residues 1097 to 1109 the composition is skewed to acidic residues; that stretch reads EEEENEENEESES. Residues K1193 and K1201 each participate in a glycyl lysine isopeptide (Lys-Gly) (interchain with G-Cter in SUMO2) cross-link. S1210 carries the post-translational modification Phosphoserine. Positions 1229–1526 are disordered; the sequence is EKKIRRKIKS…YLEESDDDLF (298 aa). Residue K1237 forms a Glycyl lysine isopeptide (Lys-Gly) (interchain with G-Cter in SUMO1); alternate linkage. K1237 is covalently cross-linked (Glycyl lysine isopeptide (Lys-Gly) (interchain with G-Cter in SUMO2); alternate). T1244 is subject to Phosphothreonine. Basic and acidic residues predominate over residues 1254 to 1268; it reads LRQRLEKRQKREPGT. Residues K1272, K1279, and K1282 each participate in a glycyl lysine isopeptide (Lys-Gly) (interchain with G-Cter in SUMO2) cross-link. S1291, S1293, S1295, and S1298 each carry phosphoserine. The residue at position 1323 (T1323) is a Phosphothreonine. Acidic residues predominate over residues 1326-1346; it reads LDSDDDFSGLDEKDEDEDFFP. S1328 and S1333 each carry phosphoserine. T1350 is subject to Phosphothreonine. Residues K1359, K1363, and K1369 each participate in a glycyl lysine isopeptide (Lys-Gly) (interchain with G-Cter in SUMO2) cross-link. A phosphoserine mark is found at S1370 and S1373. K1381 is covalently cross-linked (Glycyl lysine isopeptide (Lys-Gly) (interchain with G-Cter in SUMO2)). Phosphoserine is present on residues S1383 and S1387. Positions 1417 to 1427 are enriched in polar residues; that stretch reads TKGQSLTSTAG. K1418 is covalently cross-linked (Glycyl lysine isopeptide (Lys-Gly) (interchain with G-Cter in SUMO2); alternate). At K1418 the chain carries N6-acetyllysine; alternate. An interaction with PLSCR1 region spans residues 1429–1435; it reads KKRAVPK. K1438 participates in a covalent cross-link: Glycyl lysine isopeptide (Lys-Gly) (interchain with G-Cter in SUMO2); alternate. K1438 is subject to N6-acetyllysine; alternate. Residues K1450 and K1455 each participate in a glycyl lysine isopeptide (Lys-Gly) (interchain with G-Cter in SUMO2) cross-link. 4 positions are modified to phosphoserine: S1465, S1467, S1470, and S1472. Residues K1480 and K1488 each participate in a glycyl lysine isopeptide (Lys-Gly) (interchain with G-Cter in SUMO2) cross-link. Basic and acidic residues predominate over residues 1487-1498; sequence LKGEERDFHVDL. S1521 bears the Phosphoserine mark.

This sequence belongs to the type II topoisomerase family. Homodimer. Interacts with COPS5. Interacts with RECQL5; this stimulates DNA decatenation. Interacts with SETMAR; stimulates the topoisomerase activity. Interacts with DHX9; this interaction occurs in a E2 enzyme UBE2I- and RNA-dependent manner, negatively regulates DHX9-mediated double-stranded DNA and RNA duplex helicase activity and stimulates TOP2A-mediated supercoiled DNA relaxation activity. Interacts with HNRNPU (via C-terminus); this interaction protects the topoisomerase TOP2A from degradation and positively regulates the relaxation of supercoiled DNA in a RNA-dependent manner. Interacts with MCM3AP. Interacts with ERCC6. Interacts with PLSCR1. Interacts with GCNA; this interaction allows the resolution of topoisomerase II (TOP2A) DNA-protein cross-links. Interacts with POL1RA/RPA1 (via dock II) and UBTF in the context of Pol I complex; may assist Pol I transcription initiation by releasing supercoils occurring during DNA unwinding. Interacts with TPRN; TPRN interacts with a number of DNA damage response proteins, is recruited to sites of DNA damage and may play a role in DNA damage repair. Requires Mg(2+) as cofactor. Mn(2+) serves as cofactor. Ca(2+) is required as a cofactor. In terms of processing, phosphorylation has no effect on catalytic activity.

Its subcellular location is the cytoplasm. The protein resides in the nucleus. It is found in the nucleoplasm. The protein localises to the nucleolus. The catalysed reaction is ATP-dependent breakage, passage and rejoining of double-stranded DNA.. Key decatenating enzyme that alters DNA topology by binding to two double-stranded DNA molecules, generating a double-stranded break in one of the strands, passing the intact strand through the broken strand, and religating the broken strand. May play a role in regulating the period length of BMAL1 transcriptional oscillation. The polypeptide is DNA topoisomerase 2-alpha (Top2a) (Rattus norvegicus (Rat)).